Reading from the N-terminus, the 766-residue chain is Tripartite terminase subunit 1 (766 aa).

A C3H1-type zinc finger spans residues 191–219; the sequence is CSVCFEELCVTANQGEAVHRRLLECTCDH. Residue 683-690 participates in ATP binding; the sequence is FSSVFHCG.

The protein belongs to the herpesviridae TRM1 protein family. Associates with TRM2 and TRM3 to form the tripartite terminase complex. Interacts with portal protein.

It localises to the host nucleus. Component of the molecular motor that translocates viral genomic DNA in empty capsid during DNA packaging. Forms a tripartite terminase complex together with TRM2 and TRM3 in the host cytoplasm. Once the complex reaches the host nucleus, it interacts with the capsid portal vertex. This portal forms a ring in which genomic DNA is translocated into the capsid. TRM1 carries an endonuclease activity that plays an important role for the cleavage of concatemeric viral DNA into unit length genomes. This chain is Tripartite terminase subunit 1, found in Equus caballus (Horse).